The primary structure comprises 359 residues: Golgi-resident adenosine 3',5'-bisphosphate 3'-phosphatase (359 aa).

M1 carries the post-translational modification N-acetylmethionine. The Cytoplasmic segment spans residues 1-12 (MAPMGIRLSPLG). Residues 13-33 (VAVFCLLGLGVLYHLYSGFLA) form a helical membrane-spanning segment. Over 34 to 359 (GRFSLFGLGG…LPDLEKTGHK (326 aa)) the chain is Lumenal. The interval 86 to 106 (ESNVLHEKSKGKTREGAEDKM) is disordered. D110 acts as the Proton acceptor in catalysis. Residues E133, D174, L176, and D177 each coordinate Mg(2+). T179 (proton acceptor) is an active-site residue. AMP-binding residues include S242 and H245. N-linked (GlcNAc...) asparagine glycosylation occurs at N259. Residues G268 and K272 each coordinate AMP. D300 serves as a coordination point for Mg(2+).

Belongs to the inositol monophosphatase superfamily. The cofactor is Mg(2+). In terms of processing, contains N-linked glycan resistant to endoglycosydase H.

The protein resides in the golgi apparatus. It is found in the trans-Golgi network membrane. It carries out the reaction adenosine 3',5'-bisphosphate + H2O = AMP + phosphate. It functions in the pathway sulfur metabolism. With respect to regulation, strongly inhibited by lithium. Exhibits 3'-nucleotidase activity toward adenosine 3',5'-bisphosphate (PAP), namely hydrolyzes adenosine 3',5'-bisphosphate into adenosine 5'-monophosphate (AMP) and a phosphate. May play a role in the formation of skeletal elements derived through endochondral ossification, possibly by clearing adenosine 3',5'-bisphosphate produced by Golgi sulfotransferases during glycosaminoglycan sulfation. Has no activity toward 3'-phosphoadenosine 5'-phosphosulfate (PAPS) or inositol phosphate (IP) substrates including I(1)P, I(1,4)P2, I(1,3,4)P3, I(1,4,5)P3 and I(1,3,4,5)P4. This chain is Golgi-resident adenosine 3',5'-bisphosphate 3'-phosphatase, found in Homo sapiens (Human).